The primary structure comprises 157 residues: 6,7-dimethyl-8-ribityllumazine synthase (157 aa).

5-amino-6-(D-ribitylamino)uracil is bound by residues Phe25, 59–61, and 83–85; these read AME and AII. Residue 88 to 89 participates in (2S)-2-hydroxy-3-oxobutyl phosphate binding; sequence ST. His91 acts as the Proton donor in catalysis. Phe116 contacts 5-amino-6-(D-ribitylamino)uracil. Arg130 is a binding site for (2S)-2-hydroxy-3-oxobutyl phosphate.

It belongs to the DMRL synthase family.

It carries out the reaction (2S)-2-hydroxy-3-oxobutyl phosphate + 5-amino-6-(D-ribitylamino)uracil = 6,7-dimethyl-8-(1-D-ribityl)lumazine + phosphate + 2 H2O + H(+). Its pathway is cofactor biosynthesis; riboflavin biosynthesis; riboflavin from 2-hydroxy-3-oxobutyl phosphate and 5-amino-6-(D-ribitylamino)uracil: step 1/2. Functionally, catalyzes the formation of 6,7-dimethyl-8-ribityllumazine by condensation of 5-amino-6-(D-ribitylamino)uracil with 3,4-dihydroxy-2-butanone 4-phosphate. This is the penultimate step in the biosynthesis of riboflavin. This chain is 6,7-dimethyl-8-ribityllumazine synthase, found in Lawsonia intracellularis (strain PHE/MN1-00).